The chain runs to 208 residues: Outer-membrane lipoprotein LolB (208 aa).

An N-terminal signal peptide occupies residues Met-1 to Ala-23. Cys-24 carries N-palmitoyl cysteine lipidation. Cys-24 carries S-diacylglycerol cysteine lipidation.

Belongs to the LolB family. In terms of assembly, monomer.

It is found in the cell outer membrane. Its function is as follows. Plays a critical role in the incorporation of lipoproteins in the outer membrane after they are released by the LolA protein. This chain is Outer-membrane lipoprotein LolB, found in Photorhabdus laumondii subsp. laumondii (strain DSM 15139 / CIP 105565 / TT01) (Photorhabdus luminescens subsp. laumondii).